Consider the following 62-residue polypeptide: uncharacterized protein (62 aa).

Residues 17-37 (IVFFLGLVVVLLMMINLYMLI) form a helical membrane-spanning segment.

It localises to the membrane. This is an uncharacterized protein from Helicobacter pylori (strain J99 / ATCC 700824) (Campylobacter pylori J99).